The primary structure comprises 218 residues: Large ribosomal subunit protein uL3 (218 aa).

Belongs to the universal ribosomal protein uL3 family. As to quaternary structure, part of the 50S ribosomal subunit. Forms a cluster with proteins L14 and L19.

Functionally, one of the primary rRNA binding proteins, it binds directly near the 3'-end of the 23S rRNA, where it nucleates assembly of the 50S subunit. In Corynebacterium urealyticum (strain ATCC 43042 / DSM 7109), this protein is Large ribosomal subunit protein uL3.